The primary structure comprises 557 residues: Leucine-rich glioma-inactivated protein 1 (557 aa).

A signal peptide spans 1-34 (MESESIRRMGNACIPLKRIAYFLCLFSVVLLTEG). The region spanning 35-72 (KKPAKPKCPAVCTCSKDNALCENARSIPRTVPPDVISL) is the LRRNT domain. 3 LRR repeats span residues 92–113 (SLQL…AFIG), 116–137 (HLEY…TFRG), and 140–161 (SLIH…IFKG). Residues 173–223 (NSFNCDCKLKWLVEWLGHTNATVEDIYCEGPPEYKKRKINSLSPKDFDCII) form the LRRCT domain. N-linked (GlcNAc...) asparagine glycosylation is present at asparagine 192. EAR repeat units lie at residues 225–267 (EFAK…EWDH), 271–313 (TFRN…KRDG), 317–364 (KFIK…KWNG), 366–415 (GFYS…QWSK), 419–462 (LFIN…KWGG), 464–506 (SFQD…NWDA), and 510–552 (KFVK…KHVI). An N-linked (GlcNAc...) asparagine glycan is attached at asparagine 277. A glycan (N-linked (GlcNAc...) asparagine) is linked at asparagine 422.

In terms of assembly, oligomer. Interacts with KCNA1 within a complex containing KCNA1, KCNA4 and KCNAB1. Can bind to ADAM11 and ADAM23. Part of a complex containing ADAM22, DLG4/PSD95 and CACNG2 (stargazin). Glycosylated. In terms of tissue distribution, expressed in brain. High levels found in hippocampus, thalamic nuclei, neocortex, and molecular and granule cell layers of the cerebellum.

It localises to the secreted. It is found in the synapse. The protein localises to the cytoplasm. In terms of biological role, plays a role in suppressing the production of MMP1/3 through the phosphatidylinositol 3-kinase/ERK pathway. Regulates voltage-gated potassium channels assembled from KCNA1, KCNA4 and KCNAB1. It slows down channel inactivation by precluding channel closure mediated by the KCNAB1 subunit. Ligand for ADAM22 that positively regulates synaptic transmission mediated by AMPA-type glutamate receptors. The protein is Leucine-rich glioma-inactivated protein 1 (Lgi1) of Rattus norvegicus (Rat).